Reading from the N-terminus, the 428-residue chain is Phosphomethylpyrimidine synthase 1 (428 aa).

Residues N65, M94, Y123, H158, 180 to 182 (SRG), 221 to 224 (DGMR), and E260 each bind substrate. H264 serves as a coordination point for Zn(2+). Y287 is a substrate binding site. H328 provides a ligand contact to Zn(2+). [4Fe-4S] cluster-binding residues include C405, C408, and C412.

This sequence belongs to the ThiC family. [4Fe-4S] cluster is required as a cofactor.

The enzyme catalyses 5-amino-1-(5-phospho-beta-D-ribosyl)imidazole + S-adenosyl-L-methionine = 4-amino-2-methyl-5-(phosphooxymethyl)pyrimidine + CO + 5'-deoxyadenosine + formate + L-methionine + 3 H(+). Its pathway is cofactor biosynthesis; thiamine diphosphate biosynthesis. Its function is as follows. Catalyzes the synthesis of the hydroxymethylpyrimidine phosphate (HMP-P) moiety of thiamine from aminoimidazole ribotide (AIR) in a radical S-adenosyl-L-methionine (SAM)-dependent reaction. This chain is Phosphomethylpyrimidine synthase 1, found in Methanosarcina mazei (strain ATCC BAA-159 / DSM 3647 / Goe1 / Go1 / JCM 11833 / OCM 88) (Methanosarcina frisia).